The primary structure comprises 1284 residues: DNA-directed RNA polymerase subunit beta (1284 aa).

This sequence belongs to the RNA polymerase beta chain family. In terms of assembly, the RNAP catalytic core consists of 2 alpha, 1 beta, 1 beta' and 1 omega subunit. When a sigma factor is associated with the core the holoenzyme is formed, which can initiate transcription.

It catalyses the reaction RNA(n) + a ribonucleoside 5'-triphosphate = RNA(n+1) + diphosphate. Its function is as follows. DNA-dependent RNA polymerase catalyzes the transcription of DNA into RNA using the four ribonucleoside triphosphates as substrates. This chain is DNA-directed RNA polymerase subunit beta, found in Mesoplasma florum (strain ATCC 33453 / NBRC 100688 / NCTC 11704 / L1) (Acholeplasma florum).